Here is a 245-residue protein sequence, read N- to C-terminus: RNA polymerase sigma factor SigI5 (245 aa).

Residues 60-73 (DEYSIGLMAFNEAI) carry the Polymerase core binding motif. Residues 202 to 221 (MKELSKIIDVHPKTVERNRA) constitute a DNA-binding region (H-T-H motif).

This sequence belongs to the sigma-70 factor family. SigI subfamily. Interacts with RsgI5.

The protein resides in the cytoplasm. With respect to regulation, negatively regulated by the anti-sigma-I factor RsgI5. Binding of the polysaccharide substrate to RsgI5 may lead to the release and activation of SigI5. Functionally, sigma factors are initiation factors that promote the attachment of RNA polymerase to specific initiation sites and are then released. This sigma factor is involved in regulation of cellulosomal genes via an external polysaccharide-sensing mechanism. This Acetivibrio thermocellus (strain ATCC 27405 / DSM 1237 / JCM 9322 / NBRC 103400 / NCIMB 10682 / NRRL B-4536 / VPI 7372) (Clostridium thermocellum) protein is RNA polymerase sigma factor SigI5.